We begin with the raw amino-acid sequence, 355 residues long: 1D-myo-inositol 2-acetamido-2-deoxy-alpha-D-glucopyranoside deacetylase 3 (355 aa).

Residues His31, Asp34, and His169 each contribute to the Zn(2+) site.

The protein belongs to the MshB deacetylase family. The cofactor is Zn(2+).

The enzyme catalyses 1D-myo-inositol 2-acetamido-2-deoxy-alpha-D-glucopyranoside + H2O = 1D-myo-inositol 2-amino-2-deoxy-alpha-D-glucopyranoside + acetate. Its function is as follows. Catalyzes the deacetylation of 1D-myo-inositol 2-acetamido-2-deoxy-alpha-D-glucopyranoside (GlcNAc-Ins) in the mycothiol biosynthesis pathway. The protein is 1D-myo-inositol 2-acetamido-2-deoxy-alpha-D-glucopyranoside deacetylase 3 of Catenulispora acidiphila (strain DSM 44928 / JCM 14897 / NBRC 102108 / NRRL B-24433 / ID139908).